Consider the following 55-residue polypeptide: UPF0391 membrane protein Neut_2351/Neut_2360 (55 aa).

Helical transmembrane passes span 4–24 (LAVV…TGVA) and 28–48 (AEMA…FWVL).

Belongs to the UPF0391 family.

The protein resides in the cell membrane. This Nitrosomonas eutropha (strain DSM 101675 / C91 / Nm57) protein is UPF0391 membrane protein Neut_2351/Neut_2360.